We begin with the raw amino-acid sequence, 594 residues long: NADH-quinone oxidoreductase subunit C/D (594 aa).

Residues 1-185 (MTTGSALYIP…DPFSLNLAKQ (185 aa)) form an NADH dehydrogenase I subunit C region. Residues 209-594 (DYMFLNLGPN…IDFVMADVDR (386 aa)) form an NADH dehydrogenase I subunit D region.

The protein in the N-terminal section; belongs to the complex I 30 kDa subunit family. It in the C-terminal section; belongs to the complex I 49 kDa subunit family. NDH-1 is composed of 13 different subunits. Subunits NuoB, CD, E, F, and G constitute the peripheral sector of the complex.

The protein resides in the cell inner membrane. The enzyme catalyses a quinone + NADH + 5 H(+)(in) = a quinol + NAD(+) + 4 H(+)(out). In terms of biological role, NDH-1 shuttles electrons from NADH, via FMN and iron-sulfur (Fe-S) centers, to quinones in the respiratory chain. The immediate electron acceptor for the enzyme in this species is believed to be ubiquinone. Couples the redox reaction to proton translocation (for every two electrons transferred, four hydrogen ions are translocated across the cytoplasmic membrane), and thus conserves the redox energy in a proton gradient. This chain is NADH-quinone oxidoreductase subunit C/D, found in Pseudomonas fluorescens (strain SBW25).